A 271-amino-acid chain; its full sequence is Protein FANTASTIC FOUR 1 (271 aa).

The 55-residue stretch at Asn114–Leu168 folds into the FAF domain. Residues Asn174–Glu255 form a disordered region. A compositionally biased stretch (acidic residues) spans Asp177–Gly224. Basic residues predominate over residues Gly237 to Arg247.

The protein belongs to the fantastic four family. Expressed in the shoot apex, stamens, anthers and young siliques. Detected in provascular and vascular tissue.

Functionally, able to repress WUS when constitutively overexpressed, but have no effect on CLV3. The protein is Protein FANTASTIC FOUR 1 (FAF1) of Arabidopsis thaliana (Mouse-ear cress).